We begin with the raw amino-acid sequence, 24 residues long: Humanin-like 3 (24 aa).

The protein belongs to the humanin family. As to expression, highly expressed in testis. Also expressed in kidney, heart, skeletal muscles and brain.

Its subcellular location is the secreted. The protein localises to the cytoplasm. In terms of biological role, plays a role as a neuroprotective and antiapoptotic factor. In Homo sapiens (Human), this protein is Humanin-like 3.